Reading from the N-terminus, the 407-residue chain is uncharacterized protein (407 aa).

Topologically, residues 1–290 are lumenal; it reads MPLNIIGTAL…SNSLRRVISN (290 aa). Residues Asp114, Lys236, and Ser281 each coordinate NADP(+). The active-site Lowers pKa of active site Tyr is the Lys236. The chain crosses the membrane as a helical span at residues 291 to 311; sequence GSVVLLIILYCILLYPILWLF. The Cytoplasmic segment spans residues 312 to 407; that stretch reads TKSGRRGDQS…KSQNKSRKDD (96 aa). Residues 361-390 are a coiled coil; that stretch reads ELQKKLFDNTERDILQLEKKVAAKRNANKT. Positions 383–407 are disordered; that stretch reads AKRNANKTGNQNSKKKSQNKSRKDD. The span at 395 to 407 shows a compositional bias: basic residues; the sequence is SKKKSQNKSRKDD.

The protein belongs to the short-chain dehydrogenases/reductases (SDR) family.

It localises to the endoplasmic reticulum membrane. In terms of biological role, may be involved in lipid metabolism. This is an uncharacterized protein from Saccharomyces cerevisiae (strain ATCC 204508 / S288c) (Baker's yeast).